Reading from the N-terminus, the 1150-residue chain is MRKKQKLPFDKLAIALMSTSILLNAQSDIKANTVTEDTPAAEQAVETPQPTAVSEEVPSSKETKTPQTPDNAEETVADKANDLALQAPAKTADTPATSKATIRDLNDPSQVKTLQEKAGKGAGTVVAVIDAGFDKNHEAWRLTDKTKARYQSKEDLEKAKKEHGITYGEWVNDKVAYYHDYSKDGKTAVDQEHGTHVSGILSGNAPSETKEPYRLEGAMPEAQLLLMRVEIVNGLADYARNYAQAIRDAVNLGAKVINMSFGNAALAYANLPDETKKAFDYAKSKGVSIVTSAGNDSSFGGKTRLPLADHPDYGVVGTPAAADSTLTVASYSPDKQLTETATVKTADQQDKEMPVLSTNRFEPNKAYDYAYANRGMKEDDFKDVKGKIALIERGDIDFKDKIANAKKAGAVGVLIYDNQDKGFPIELPNVDQMPAAFISRKDGLLLKENPQKTITFNATPKVLPTASGTKLSRFSSWGLTADGNIKPDIAAPGQDILSSVANNKYAKLSGTSMSAPLVAGIMGLLQKQYEIQYPDMTPSERLDLAKKVLMSSATALYDEDEKAYFSPRQQGAGAVDAKKASAATMYVTDKDNTSSKVHLNNVSDKFEVTVTVHNKSDKPQELYYQATVQTDKVDGKHFALAPKALYETSWQKITIPANSSKQVTVPIDASRFSKDLLAQMKNGYFLEGFVRFKQDPKKEELMSIPYIGFRGDFGNLSALEKPIYDSKDGSSYYHEANSDAKDQLDGDGLQFYALKNNFTALTTESNPWTIIKAVKEGVENIEDIESSEITETIFAGTFAKQDDDSHYYIHRHANGKPYAAISPNGDGNRDYVQFQGTFLRNAKNLVAEVLDKEGNVVWTSEVTEQVVKNYNNDLASTLGSTRFEKTRWDGKDKDGKVVANGTYTYRVRYTPISSGAKEQHTDFDVIVDNTTLEVATSATFSTEDRRLTLASKPKTSQPIYRERIAYTYMDEDLPTTEYISPNEDGTFTLPEEAETMEGATVPLKMSDFTYVVEDMAGNITYTPVTKLLEGHSNKPEQDGSDQAPDKKPEAKPEQDGSGQTPDKKPETKPEKDSSGQTPGKTPQKGQPSRTLEKRSSKRALATKASARDQLPTTNDKDTNRLHLLKLVMTTFFFGLVAHIFKTKRQKETKK.

An N-terminal signal peptide occupies residues 1 to 31 (MRKKQKLPFDKLAIALMSTSILLNAQSDIKA). The tract at residues 33 to 73 (TVTEDTPAAEQAVETPQPTAVSEEVPSSKETKTPQTPDNAE) is disordered. Residues 99 to 581 (KATIRDLNDP…AGAVDAKKAS (483 aa)) enclose the Peptidase S8 domain. Catalysis depends on charge relay system residues Asp130, His193, and Ser512. Basic and acidic residues-rich tracts occupy residues 1029 to 1054 (EGHS…KPEQ) and 1061 to 1073 (PDKK…EKDS). The tract at residues 1029–1116 (EGHSNKPEQD…RDQLPTTNDK (88 aa)) is disordered. Repeat copies occupy residues 1034 to 1050 (KPEQ…KPEA), 1051 to 1067 (KPEQ…KPET), and 1068 to 1084 (KPEK…TPQK). The interval 1034 to 1084 (KPEQDGSDQAPDKKPEAKPEQDGSGQTPDKKPETKPEKDSSGQTPGKTPQK) is 3 X 17 AA tandem repeats. Positions 1075-1089 (GQTPGKTPQKGQPSR) are enriched in polar residues. Positions 1110 to 1114 (LPTTN) match the LPXTG sorting signal motif. Thr1113 is subject to Pentaglycyl murein peptidoglycan amidated threonine. Residues 1114–1150 (NDKDTNRLHLLKLVMTTFFFGLVAHIFKTKRQKETKK) constitute a propeptide, removed by sortase.

It belongs to the peptidase S8 family. In terms of processing, cleaved by SpeB protease; leading to its degradation. Degradation by SpeB is probably strictly regulated to preserve integrity of C5a peptidase.

The protein localises to the secreted. Its subcellular location is the cell wall. The catalysed reaction is The primary cleavage site is at 67-His-|-Lys-68 in human C5a with a minor secondary cleavage site at 58-Ala-|-Ser-59.. Functionally, this virulence factor of S.pyogenes specifically cleaves the human serum chemotaxin C5a at '68-Lys-|-Asp-69' bond near its C-terminus, destroying its ability to serve as a chemoattractant. The chain is C5a peptidase (scpA) from Streptococcus pyogenes serotype M18 (strain MGAS8232).